A 91-amino-acid polypeptide reads, in one-letter code: DNA-directed RNA polymerase subunit omega (91 aa).

This sequence belongs to the RNA polymerase subunit omega family. The RNAP catalytic core consists of 2 alpha, 1 beta, 1 beta' and 1 omega subunit. When a sigma factor is associated with the core the holoenzyme is formed, which can initiate transcription.

The enzyme catalyses RNA(n) + a ribonucleoside 5'-triphosphate = RNA(n+1) + diphosphate. Its function is as follows. Promotes RNA polymerase assembly. Latches the N- and C-terminal regions of the beta' subunit thereby facilitating its interaction with the beta and alpha subunits. The chain is DNA-directed RNA polymerase subunit omega from Yersinia pestis bv. Antiqua (strain Antiqua).